Consider the following 134-residue polypeptide: Complexin-2 (134 aa).

Positions 1 to 114 (MDFVMKQALG…CGDEDEEDEE (114 aa)) are disordered. A compositionally biased stretch (basic and acidic residues) spans 15–85 (DMGKMLGGDE…EEKEAEEKAA (71 aa)). Residues 29-84 (DAQKKEEERQEALRQQEDERKQKHIRMETEREKVRQQIRDKYGLKKKEEKEAEEKA) adopt a coiled-coil conformation.

It belongs to the complexin/synaphin family. Binds to the SNARE core complex containing SNAP25, VAMP2 and STX1A. As to expression, nervous system. Present in electric organ (at protein level).

It is found in the cytoplasm. The protein localises to the cytosol. The protein resides in the presynapse. It localises to the nucleus. Its subcellular location is the perikaryon. Positively regulates a late step in synaptic vesicle exocytosis. This is Complexin-2 from Narke japonica (Japanese sleeper ray).